Reading from the N-terminus, the 164-residue chain is Cyanate hydratase (164 aa).

Active-site residues include Arg-90, Glu-93, and Ser-116.

This sequence belongs to the cyanase family.

It catalyses the reaction cyanate + hydrogencarbonate + 3 H(+) = NH4(+) + 2 CO2. Functionally, catalyzes the reaction of cyanate with bicarbonate to produce ammonia and carbon dioxide. The chain is Cyanate hydratase from Ricinus communis (Castor bean).